We begin with the raw amino-acid sequence, 308 residues long: Porphobilinogen deaminase (308 aa).

An S-(dipyrrolylmethanemethyl)cysteine modification is found at Cys-240.

Belongs to the HMBS family. As to quaternary structure, monomer. Dipyrromethane is required as a cofactor.

The enzyme catalyses 4 porphobilinogen + H2O = hydroxymethylbilane + 4 NH4(+). It participates in porphyrin-containing compound metabolism; protoporphyrin-IX biosynthesis; coproporphyrinogen-III from 5-aminolevulinate: step 2/4. Its function is as follows. Tetrapolymerization of the monopyrrole PBG into the hydroxymethylbilane pre-uroporphyrinogen in several discrete steps. This chain is Porphobilinogen deaminase, found in Maridesulfovibrio salexigens (strain ATCC 14822 / DSM 2638 / NCIMB 8403 / VKM B-1763) (Desulfovibrio salexigens).